The primary structure comprises 907 residues: Potassium channel AKT3 (907 aa).

Over 1–75 (MPTTKCAVPL…YDRRYELWNN (75 aa)) the chain is Cytoplasmic. The chain crosses the membrane as a helical span at residues 76 to 96 (YLILLVVYSAWVTPFEFGFVP). The Extracellular segment spans residues 97 to 102 (EPAGAL). The chain crosses the membrane as a helical span at residues 103 to 123 (AAADNAVNAFFAVDIVLTFFV). The Cytoplasmic portion of the chain corresponds to 124–146 (AYTDPKTFLLQDDPRKIALRYIT). Residues 147–167 (TWFVLDVVATIPTELARRILP) traverse the membrane as a helical segment. Over 168 to 174 (PDLRSYG) the chain is Extracellular. The chain crosses the membrane as a helical; Voltage-sensor span at residues 175–195 (FFGILRLWRLHRVGILFARLE). Residues 196–209 (KDRKFSYFWVRCVK) lie on the Cytoplasmic side of the membrane. Residues 210 to 230 (LVCVTLFAVHCSACFYYLLAD) form a helical membrane-spanning segment. The Extracellular segment spans residues 231 to 257 (RYPDPTNTWISAYMPNFHKASIWSRYV). Residues 258–277 (ASMYWSITTLSTVGYGDMHA) constitute an intramembrane region (pore-forming). Topologically, residues 278–288 (ENTGEMVFTTT) are extracellular. A helical transmembrane segment spans residues 289–309 (YMLFNLGLTAYIIGNMTNLVV). Residues 310 to 907 (HGTSRTRKFR…VPPENRSRNQ (598 aa)) lie on the Cytoplasmic side of the membrane. 388-512 (LFEGVSNDLI…TIVMNNLIQY (125 aa)) contacts a nucleoside 3',5'-cyclic phosphate. ANK repeat units follow at residues 539 to 568 (DFPI…DPNE), 572 to 601 (YGRT…DSNS), 605 to 634 (EGRV…DLSG), 636 to 665 (DAAP…DVSG), and 670 to 699 (DGTT…DADA). 2 disordered regions span residues 726–779 (ATRH…TPQR) and 801–824 (GGYR…SSPP). The segment covering 754–776 (SSPSSSSRRGRTSSTSAASARST) has biased composition (low complexity). Residues 803 to 812 (YRGGGGGGGA) show a composition bias toward gly residues. The 81-residue stretch at 827-907 (RVAISCPESR…VPPENRSRNQ (81 aa)) folds into the KHA domain.

The protein belongs to the potassium channel family. Plant (TC 1.A.1.4) subfamily.

The protein resides in the membrane. Probable inward-rectifying potassium channel. Assuming opened or closed conformations in response to the voltage difference across the membrane, the channel is activated by hyperpolarization. This chain is Potassium channel AKT3, found in Oryza sativa subsp. japonica (Rice).